Consider the following 162-residue polypeptide: NADH-quinone oxidoreductase subunit I (162 aa).

2 consecutive 4Fe-4S ferredoxin-type domains span residues 54–83 (RRYE…IESE) and 93–122 (TRYD…ETQI). 8 residues coordinate [4Fe-4S] cluster: Cys-63, Cys-66, Cys-69, Cys-73, Cys-102, Cys-105, Cys-108, and Cys-112.

Belongs to the complex I 23 kDa subunit family. In terms of assembly, NDH-1 is composed of 14 different subunits. Subunits NuoA, H, J, K, L, M, N constitute the membrane sector of the complex. It depends on [4Fe-4S] cluster as a cofactor.

Its subcellular location is the cell inner membrane. The enzyme catalyses a quinone + NADH + 5 H(+)(in) = a quinol + NAD(+) + 4 H(+)(out). NDH-1 shuttles electrons from NADH, via FMN and iron-sulfur (Fe-S) centers, to quinones in the respiratory chain. The immediate electron acceptor for the enzyme in this species is believed to be ubiquinone. Couples the redox reaction to proton translocation (for every two electrons transferred, four hydrogen ions are translocated across the cytoplasmic membrane), and thus conserves the redox energy in a proton gradient. This is NADH-quinone oxidoreductase subunit I from Burkholderia cenocepacia (strain ATCC BAA-245 / DSM 16553 / LMG 16656 / NCTC 13227 / J2315 / CF5610) (Burkholderia cepacia (strain J2315)).